The following is a 427-amino-acid chain: Protein adenylyltransferase Fic (427 aa).

The chain crosses the membrane as a helical span at residues 17-37 (LLLASLAGLSIAIIVTHAPVF). TPR repeat units lie at residues 77 to 110 (ALAALKAASAMKHGGKHSKAVKLFQQAVSLAPHH) and 111 to 143 (PEILLQYGEFLEQHDVVQAEHLYNRALTANPLD). The Inhibitory (S/T)XXXE(G/N) motif motif lies at 200–205 (SNAIEG). Residues E204 and 286–289 (VSDH) each bind ATP. Residues 255–390 (ITIDDIIEIH…IRPFIRFVAR (136 aa)) form the Fido domain. H333 is an active-site residue. ATP-binding positions include 337-344 (DGNGRTAR), 369-370 (YY), and N377.

It belongs to the fic family. Homodimer.

The protein resides in the membrane. It catalyses the reaction L-tyrosyl-[protein] + ATP = O-(5'-adenylyl)-L-tyrosyl-[protein] + diphosphate. The enzyme catalyses L-threonyl-[protein] + ATP = 3-O-(5'-adenylyl)-L-threonyl-[protein] + diphosphate. It carries out the reaction 3-O-(5'-adenylyl)-L-threonyl-[protein] + H2O = L-threonyl-[protein] + AMP + H(+). Its activity is regulated as follows. The side chain of Glu-204 determines which of the two opposing activities (AMPylase or de-AMPylase) will take place. In response to endoplasmic reticulum stress, mediates de-AMPylase activity. Adenylyltransferase activity is inhibited by the inhibitory helix present at the N-terminus: Glu-204 binds ATP and competes with ATP-binding at Arg-344, thereby preventing adenylyltransferase activity. In unstressed cells, disengagement of Glu-204 promotes adenylyltransferase activity. Activation dissociates ATP-binding from Glu-204, allowing ordered binding of the entire ATP moiety with the alpha-phosphate in an orientation that is productive for accepting an incoming target hydroxyl side chain. Its function is as follows. Protein that can both mediate the addition of adenosine 5'-monophosphate (AMP) to specific residues of target proteins (AMPylation), and the removal of the same modification from target proteins (de-AMPylation), depending on the context. The side chain of Glu-204 determines which of the two opposing activities (AMPylase or de-AMPylase) will take place. Acts as a key regulator of the unfolded protein response (UPR) by mediating AMPylation or de-AMPylation of Hsc70-3/BiP. In unstressed cells, acts as an adenylyltransferase by mediating AMPylation of Hsc70-3/BiP, thereby inactivating it. In response to endoplasmic reticulum stress, acts as a phosphodiesterase by mediating removal of ATP (de-AMPylation) from Hsc70-3/BiP, leading to restore HSPA5/BiP activity. The polypeptide is Protein adenylyltransferase Fic (Nematostella vectensis (Starlet sea anemone)).